A 157-amino-acid chain; its full sequence is S-ribosylhomocysteine lyase (157 aa).

Residues histidine 54, histidine 58, and cysteine 124 each coordinate Fe cation.

The protein belongs to the LuxS family. In terms of assembly, homodimer. The cofactor is Fe cation.

It carries out the reaction S-(5-deoxy-D-ribos-5-yl)-L-homocysteine = (S)-4,5-dihydroxypentane-2,3-dione + L-homocysteine. In terms of biological role, involved in the synthesis of autoinducer 2 (AI-2) which is secreted by bacteria and is used to communicate both the cell density and the metabolic potential of the environment. The regulation of gene expression in response to changes in cell density is called quorum sensing. Catalyzes the transformation of S-ribosylhomocysteine (RHC) to homocysteine (HC) and 4,5-dihydroxy-2,3-pentadione (DPD). This chain is S-ribosylhomocysteine lyase, found in Oenococcus oeni (strain ATCC BAA-331 / PSU-1).